We begin with the raw amino-acid sequence, 397 residues long: 42.8 kDa protein in whiE locus (397 aa).

Positions 1-22 (MTVSPVVATDAPSTDATRTTAT) are disordered. Positions 8-22 (ATDAPSTDATRTTAT) are enriched in low complexity. The ABM domain occupies 46–137 (VRVVLMLDVH…DTHSLRYSVL (92 aa)).

It belongs to the SchA/CurD family.

The chain is 42.8 kDa protein in whiE locus from Streptomyces coelicolor (strain ATCC BAA-471 / A3(2) / M145).